Consider the following 339-residue polypeptide: Adenosine deaminase (339 aa).

Zn(2+) contacts are provided by histidine 15 and histidine 17. Substrate is bound by residues histidine 17, aspartate 19, and glycine 172. Histidine 199 contributes to the Zn(2+) binding site. The Proton donor role is filled by glutamate 202. Aspartate 279 serves as a coordination point for Zn(2+).

The protein belongs to the metallo-dependent hydrolases superfamily. Adenosine and AMP deaminases family. Adenosine deaminase subfamily. Zn(2+) serves as cofactor.

It carries out the reaction adenosine + H2O + H(+) = inosine + NH4(+). It catalyses the reaction 2'-deoxyadenosine + H2O + H(+) = 2'-deoxyinosine + NH4(+). In terms of biological role, catalyzes the hydrolytic deamination of adenosine and 2-deoxyadenosine. The sequence is that of Adenosine deaminase from Lacticaseibacillus casei (strain BL23) (Lactobacillus casei).